Here is a 580-residue protein sequence, read N- to C-terminus: Trafficking protein particle complex subunit 14 (580 aa).

Disordered stretches follow at residues Gly-90–Leu-138 and Val-480–Ser-533. The segment covering Pro-105–Phe-116 has biased composition (gly residues). Over residues Thr-124 to Thr-137 the composition is skewed to low complexity. Residue Ser-491 is modified to Phosphoserine. A compositionally biased stretch (low complexity) spans Arg-492–Arg-502. The span at Leu-512–Arg-525 shows a compositional bias: polar residues. The residue at position 517 (Ser-517) is a Phosphoserine. The residue at position 541 (Thr-541) is a Phosphothreonine. Residue Ser-546 is modified to Phosphoserine.

As to quaternary structure, component of the multisubunit TRAPP II complex, which includes at least TRAPPC1, TRAPPC2, TRAPPC2L, TRAPPC3, TRAPPC4, TRAPPC5, TRAPPC6A/B, TRAPPC9, TRAPPC10 and TRAPPC14. TRAPPC9, TRAPPC10 and TRAPPC14 are specific subunits of the TRAPP II complex. Interacts with alpha-tubulin during mitosis. Interacts with RAB3IP (via the N-terminal region); this interaction mediates RAB3IP association with the TRAPP II complex. Interacts with TRAPPC10. Interacts with FBF1. As to expression, broadly expressed. High levels in brain, cerebellum, testis and whole blood.

The protein resides in the cytoplasm. The protein localises to the cytoskeleton. Its subcellular location is the spindle. It localises to the vesicle. It is found in the midbody. Functionally, specific subunit of the TRAPP (transport protein particle) II complex, a highly conserved vesicle tethering complex that functions in late Golgi trafficking as a membrane tether. TRAPP II complex also has GEF activity toward RAB1A. TRAPPC14 is dispensable for TRAPPII complex integrity but mediates RAB3IP preciliary vesicle trafficking to the mother centriole during ciliogenesis. Modulates YAP1 activity as transcriptional regulator. The protein is Trafficking protein particle complex subunit 14 of Homo sapiens (Human).